We begin with the raw amino-acid sequence, 146 residues long: P antigen family member 1 (146 aa).

The disordered stretch occupies residues tyrosine 16–proline 146. A compositionally biased stretch (acidic residues) spans serine 19–glutamate 32. A Phosphoserine modification is found at serine 63. The segment covering proline 79–methionine 92 has biased composition (basic and acidic residues). Residue serine 105 is modified to Phosphoserine. Over residues glutamate 107–glycine 120 the composition is skewed to basic and acidic residues. Serine 144 carries the post-translational modification Phosphoserine.

The protein belongs to the GAGE family. As to expression, isolated from prostate cancer cell lines; expression associated with progression to androgen insensitive phenotype. Expressed in normal testis and at lower level in normal placenta.

This chain is P antigen family member 1 (PAGE1), found in Homo sapiens (Human).